A 1386-amino-acid polypeptide reads, in one-letter code: Pleckstrin homology domain-containing family G member 2 (1386 aa).

Disordered stretches follow at residues 1–21 (MPEG…GCGR) and 36–82 (TAPA…PLPG). Composition is skewed to low complexity over residues 8–17 (LSLSKPSPSL) and 45–62 (SPRG…GSEG). A Phosphoserine modification is found at Ser-90. The 182-residue stretch at 102–283 (RLERVAREIV…TAVAWYINDM (182 aa)) folds into the DH domain. The PH domain maps to 313–411 (ELVLEGAFRG…WIHCLQRLFF (99 aa)). Disordered regions lie at residues 436–540 (KSKP…PSGT), 554–612 (GLRD…PSPL), 701–739 (EPAE…EEGV), 790–815 (ILED…RTAS), and 829–859 (QQMQ…SPCL). A Phosphothreonine modification is found at Thr-445. A phosphoserine mark is found at Ser-450 and Ser-469. The segment covering 592 to 603 (SEEEEEEEEGLE) has biased composition (acidic residues). Phosphoserine is present on residues Ser-911 and Ser-1049. 2 disordered regions span residues 1037 to 1099 (PVPK…PLPC) and 1162 to 1191 (TSPK…DTQV). 2 stretches are compositionally biased toward polar residues: residues 1048-1059 (ESPTNIPLTKQG) and 1073-1086 (QPIQ…SSLD). At Thr-1257 the chain carries Phosphothreonine. Residues Ser-1261 and Ser-1310 each carry the phosphoserine modification. 2 disordered regions span residues 1291–1333 (ARRQ…ARRL) and 1367–1386 (TQES…PFHM). Residues 1301-1317 (PAASRGSWSSAPTSRAS) show a composition bias toward low complexity. Pro residues predominate over residues 1318 to 1330 (SPPPQPQPPPPPA).

Functionally, may be a transforming oncogene with exchange activity for CDC42. May be a guanine-nucleotide exchange factor (GEF) for RAC1 and CDC42. Activated by the binding to subunits beta and gamma of the heterotrimeric guanine nucleotide-binding protein (G protein). Involved in the regulation of actin polymerization. This Homo sapiens (Human) protein is Pleckstrin homology domain-containing family G member 2 (PLEKHG2).